Consider the following 680-residue polypeptide: Galactose oxidase (680 aa).

The N-terminal stretch at 1–24 is a signal peptide; it reads MKHLLTLALCFSSINAVAVTVPHK. A propeptide spanning residues 25–41 is cleaved from the precursor; that stretch reads AVGTGIPEGSLQFLSLR. The region spanning 42–189 is the F5/8 type C domain; it reads ASAPIGSAIS…SIAEINVFQA (148 aa). A disulfide bond links Cys-59 and Cys-68. Kelch repeat units lie at residues 223–268, 279–321, 323–372, 436–490, and 492–544; these read RVLM…HDMF, QIVV…TMSD, RVFT…LYRS, KILT…VLPD, and STFI…LLLP. Positions 269 to 313 form a cross-link, 3'-(S-cysteinyl)-tyrosine (Cys-Tyr); sequence CPGISMDGNGQIVVTGGNDAKKTSLYDSSSDSWIPGPDMQVARGY. Position 313 (Tyr-313) interacts with Cu cation. Cu cation-binding residues include Tyr-536 and His-537. Residue Tyr-536 is the Proton acceptor of the active site. A disulfide bridge links Cys-556 with Cys-559. His-622 is a binding site for Cu cation.

As to quaternary structure, monomer. Cu(2+) serves as cofactor. Galactose oxidase contains a protein-derived free radical cofactor. In the active state, Tyr-313, which is cross-linked to Cys-269 via a thioether bond, is oxidized to a radical and acts with Cu(2+) as a two-electron acceptor in the oxidation reaction. The cross-link is believed to modulate the redox potential of the tyrosyl radical, which is further stabilized by a stacking interaction with Trp-331 in the active site. The post-translational formation of the cross-link is closely linked to the propeptide cleavage event, and both are copper-dependent, autocatalytic processes. The propeptide may act as an intramolecular chaperone, facilitating thioester bond formation and copper binding by positioning of active-site residues, including copper ligands.

The protein resides in the secreted. It catalyses the reaction D-galactose + O2 = D-galacto-hexodialdose + H2O2. Inhibited by diethyldithiocarbamate. Its function is as follows. Catalyzes the sterospecific oxidation of primary alcohols to the corresponding aldehydes. The biologically relevant substrate of the enzyme is not known as the enzyme exhibits broad substrate specificity from small alcohols through sugars to oligo- and polysaccharides. This chain is Galactose oxidase (GAOA), found in Gibberella zeae (Wheat head blight fungus).